A 64-amino-acid chain; its full sequence is Small ribosomal subunit protein bS18c (64 aa).

Belongs to the bacterial ribosomal protein bS18 family. Part of the 30S ribosomal subunit.

It localises to the plastid. The protein resides in the chloroplast. In Bigelowiella natans (Pedinomonas minutissima), this protein is Small ribosomal subunit protein bS18c (rps18).